Here is a 257-residue protein sequence, read N- to C-terminus: Pyridoxal phosphate homeostasis protein (257 aa).

N6-(pyridoxal phosphate)lysine is present on Lys-47.

It belongs to the pyridoxal phosphate-binding protein YggS/PROSC family.

Its function is as follows. Pyridoxal 5'-phosphate (PLP)-binding protein, which is involved in PLP homeostasis. The sequence is that of Pyridoxal phosphate homeostasis protein from Mycobacterium leprae (strain TN).